A 373-amino-acid chain; its full sequence is MKNILIFPFLSISTGHHHVADALQAELESQGLAAEKIDIFSHSYRRLEKLSSVAYLKWIQYFPKTYSGIYRLLACGEFQHDKRYFMYEWLFTQQMRHILQEKQPDIAFCTHALPSYLLNRLKPEYPNLTVVNVYTDFFVNQLWGRKNIDYHFVPSTEVKKQLISEGIDQNNIYLTGIPVHQNFEMESADTLQHHPPYTIIITGGSMGVGGILKWVQELSPGGKILYKILCGRNEKLYSYVKSLHHPLIEAIPYLHSKAEMNRLYEQATGIMTKPGGVTISECLQKRLPVFIYHALPGQEEMNLNLLHERKLVTDMRNWDMQKAEEYIAAFFQSNEQMKEYKKHVNGYLGEMSDRKIKDVLKRIIWKQKNTLLK.

It belongs to the glycosyltransferase 28 family.

This is an uncharacterized protein from Bacillus subtilis (strain 168).